The following is a 388-amino-acid chain: tRNA (guanine-N(7)-)-methyltransferase non-catalytic subunit (388 aa).

4 WD repeats span residues 58 to 102 (VEKR…KGDI), 112 to 151 (VVPK…AIEM), 153 to 194 (GAIS…DSFF), and 196 to 234 (GHTE…APRR). Positions 365 to 388 (EKKKRRLNEDINGDDGEGPGPSNS) are disordered.

This sequence belongs to the WD repeat TRM82 family. Forms a heterodimer with the catalytic subunit.

It localises to the nucleus. It functions in the pathway tRNA modification; N(7)-methylguanine-tRNA biosynthesis. Functionally, required for the formation of N(7)-methylguanine at position 46 (m7G46) in tRNA. In the complex, it is required to stabilize and induce conformational changes of the catalytic subunit. The polypeptide is tRNA (guanine-N(7)-)-methyltransferase non-catalytic subunit (Caenorhabditis elegans).